We begin with the raw amino-acid sequence, 291 residues long: Ribosomal RNA small subunit methyltransferase A (291 aa).

Residues H37, L39, G64, E85, D110, and N131 each contribute to the S-adenosyl-L-methionine site.

It belongs to the class I-like SAM-binding methyltransferase superfamily. rRNA adenine N(6)-methyltransferase family. RsmA subfamily.

It is found in the cytoplasm. The catalysed reaction is adenosine(1518)/adenosine(1519) in 16S rRNA + 4 S-adenosyl-L-methionine = N(6)-dimethyladenosine(1518)/N(6)-dimethyladenosine(1519) in 16S rRNA + 4 S-adenosyl-L-homocysteine + 4 H(+). In terms of biological role, specifically dimethylates two adjacent adenosines (A1518 and A1519) in the loop of a conserved hairpin near the 3'-end of 16S rRNA in the 30S particle. May play a critical role in biogenesis of 30S subunits. This Dehalococcoides mccartyi (strain CBDB1) protein is Ribosomal RNA small subunit methyltransferase A.